Here is a 256-residue protein sequence, read N- to C-terminus: uncharacterized protein (256 aa).

The signal sequence occupies residues 1 to 24 (MIKRVNKLVLGISLLFLVISITAG). Residue C25 is the site of N-palmitoyl cysteine attachment. A lipid anchor (S-diacylglycerol cysteine) is attached at C25.

The protein belongs to the staphylococcal tandem lipoprotein family.

It is found in the cell membrane. This is an uncharacterized protein from Staphylococcus aureus (strain MW2).